Here is a 236-residue protein sequence, read N- to C-terminus: Peptidase E (236 aa).

Active-site charge relay system residues include serine 122, aspartate 137, and histidine 159.

Belongs to the peptidase S51 family.

Its subcellular location is the cytoplasm. It catalyses the reaction Dipeptidase E catalyzes the hydrolysis of dipeptides Asp-|-Xaa. It does not act on peptides with N-terminal Glu, Asn or Gln, nor does it cleave isoaspartyl peptides.. Functionally, hydrolyzes dipeptides containing N-terminal aspartate residues. May play a role in allowing the cell to use peptide aspartate to spare carbon otherwise required for the synthesis of the aspartate family of amino acids. The sequence is that of Peptidase E from Shewanella sp. (strain MR-4).